The sequence spans 31 residues: Photosystem II reaction center protein M (31 aa).

A helical transmembrane segment spans residues 5 to 25 (ILAFIATALLILVPTAFLLII).

It belongs to the PsbM family. As to quaternary structure, PSII is composed of 1 copy each of membrane proteins PsbA, PsbB, PsbC, PsbD, PsbE, PsbF, PsbH, PsbI, PsbJ, PsbK, PsbL, PsbM, PsbT, PsbX, PsbY, PsbZ, Psb30/Ycf12, at least 3 peripheral proteins of the oxygen-evolving complex and a large number of cofactors. It forms dimeric complexes.

Its subcellular location is the plastid membrane. Its function is as follows. One of the components of the core complex of photosystem II (PSII). PSII is a light-driven water:plastoquinone oxidoreductase that uses light energy to abstract electrons from H(2)O, generating O(2) and a proton gradient subsequently used for ATP formation. It consists of a core antenna complex that captures photons, and an electron transfer chain that converts photonic excitation into a charge separation. This subunit is found at the monomer-monomer interface. This is Photosystem II reaction center protein M from Cuscuta reflexa (Southern Asian dodder).